A 262-amino-acid chain; its full sequence is Putative BTB/POZ domain-containing protein L834 (262 aa).

Residues 16–86 form the BTB domain; the sequence is FDVVVELTDE…FYKKNIQPCI (71 aa).

Belongs to the mimivirus BTB/WD family.

This chain is Putative BTB/POZ domain-containing protein L834, found in Acanthamoeba polyphaga (Amoeba).